Consider the following 364-residue polypeptide: DNA polymerase IV (364 aa).

Positions 8-189 (IIHIDMDCYF…LPLTKIPGVG (182 aa)) constitute a UmuC domain. Mg(2+) contacts are provided by Asp-12 and Asp-107. Glu-108 is an active-site residue.

Belongs to the DNA polymerase type-Y family. In terms of assembly, monomer. Mg(2+) serves as cofactor.

It is found in the cytoplasm. It catalyses the reaction DNA(n) + a 2'-deoxyribonucleoside 5'-triphosphate = DNA(n+1) + diphosphate. Its function is as follows. Poorly processive, error-prone DNA polymerase involved in untargeted mutagenesis. Copies undamaged DNA at stalled replication forks, which arise in vivo from mismatched or misaligned primer ends. These misaligned primers can be extended by PolIV. Exhibits no 3'-5' exonuclease (proofreading) activity. May be involved in translesional synthesis, in conjunction with the beta clamp from PolIII. This is DNA polymerase IV from Shewanella woodyi (strain ATCC 51908 / MS32).